Here is a 388-residue protein sequence, read N- to C-terminus: MNLHEYQAKQLFAEFGLPVPEGFACDTAQEAFEAAGRISTAKKVVKCQVHAGGRGKAGGVELHDTKEGVKEFAQKWLGKNLVTYQTDANGQPVTKILVEEASNIANELYLGAVVDRATRKIVFMASTEGGVDIEKIAEETPELIHQSAIDPLVGPQAYQGRELAFKLGLVGDQIKQFVKIFMGLGQMFSQYDLALLEINPLVITGEGNLLCLDGKINIDSNAMYRQPKLREMHDPSQEDEREAHAAQWELNYVALDGNVGCMVNGAGLAMGTMDIVNLHGGKPANFLDVGGGATKERVAEAFKIILSDDNVKAVLVNIFGGIVRCDMIAEGIIGAVKEVGVTVPVVVRLEGTNADLGREVLANSDVDIIAAVSLTDAAQKVVAAAEAK.

In terms of domain architecture, ATP-grasp spans 9-244 (KQLFAEFGLP…PSQEDEREAH (236 aa)). Residues lysine 46, 53-55 (GRG), glutamate 99, serine 102, and glutamate 107 contribute to the ATP site. Residues asparagine 199 and aspartate 213 each coordinate Mg(2+). Residues asparagine 264 and 321–323 (GIV) contribute to the substrate site.

The protein belongs to the succinate/malate CoA ligase beta subunit family. As to quaternary structure, heterotetramer of two alpha and two beta subunits. Mg(2+) serves as cofactor.

It catalyses the reaction succinate + ATP + CoA = succinyl-CoA + ADP + phosphate. The enzyme catalyses GTP + succinate + CoA = succinyl-CoA + GDP + phosphate. It functions in the pathway carbohydrate metabolism; tricarboxylic acid cycle; succinate from succinyl-CoA (ligase route): step 1/1. In terms of biological role, succinyl-CoA synthetase functions in the citric acid cycle (TCA), coupling the hydrolysis of succinyl-CoA to the synthesis of either ATP or GTP and thus represents the only step of substrate-level phosphorylation in the TCA. The beta subunit provides nucleotide specificity of the enzyme and binds the substrate succinate, while the binding sites for coenzyme A and phosphate are found in the alpha subunit. The protein is Succinate--CoA ligase [ADP-forming] subunit beta of Vibrio atlanticus (strain LGP32) (Vibrio splendidus (strain Mel32)).